We begin with the raw amino-acid sequence, 304 residues long: Methionyl-tRNA formyltransferase (304 aa).

111 to 114 (SLLP) is a (6S)-5,6,7,8-tetrahydrofolate binding site.

It belongs to the Fmt family.

It carries out the reaction L-methionyl-tRNA(fMet) + (6R)-10-formyltetrahydrofolate = N-formyl-L-methionyl-tRNA(fMet) + (6S)-5,6,7,8-tetrahydrofolate + H(+). In terms of biological role, attaches a formyl group to the free amino group of methionyl-tRNA(fMet). The formyl group appears to play a dual role in the initiator identity of N-formylmethionyl-tRNA by promoting its recognition by IF2 and preventing the misappropriation of this tRNA by the elongation apparatus. The polypeptide is Methionyl-tRNA formyltransferase (Campylobacter fetus subsp. fetus (strain 82-40)).